The sequence spans 453 residues: Phosphoglucosamine mutase (453 aa).

Ser-105 (phosphoserine intermediate) is an active-site residue. Positions 105, 244, 246, and 248 each coordinate Mg(2+). The residue at position 105 (Ser-105) is a Phosphoserine.

It belongs to the phosphohexose mutase family. It depends on Mg(2+) as a cofactor. Post-translationally, activated by phosphorylation.

It catalyses the reaction alpha-D-glucosamine 1-phosphate = D-glucosamine 6-phosphate. In terms of biological role, catalyzes the conversion of glucosamine-6-phosphate to glucosamine-1-phosphate. This is Phosphoglucosamine mutase from Blochmanniella pennsylvanica (strain BPEN).